Here is a 465-residue protein sequence, read N- to C-terminus: ATP-dependent protease ATPase subunit HslU (465 aa).

ATP contacts are provided by residues V19 and 61-66 (GVGKTE). A disordered region spans residues 153–175 (LFQSDGSDGDDETTEQDSHDEIR). ATP contacts are provided by D279, E343, and R415.

The protein belongs to the ClpX chaperone family. HslU subfamily. As to quaternary structure, a double ring-shaped homohexamer of HslV is capped on each side by a ring-shaped HslU homohexamer. The assembly of the HslU/HslV complex is dependent on binding of ATP.

The protein localises to the cytoplasm. Its function is as follows. ATPase subunit of a proteasome-like degradation complex; this subunit has chaperone activity. The binding of ATP and its subsequent hydrolysis by HslU are essential for unfolding of protein substrates subsequently hydrolyzed by HslV. HslU recognizes the N-terminal part of its protein substrates and unfolds these before they are guided to HslV for hydrolysis. The sequence is that of ATP-dependent protease ATPase subunit HslU from Oceanobacillus iheyensis (strain DSM 14371 / CIP 107618 / JCM 11309 / KCTC 3954 / HTE831).